A 309-amino-acid chain; its full sequence is tRNA uridine(34) hydroxylase (309 aa).

Residues 123 to 217 form the Rhodanese domain; that stretch reads DDPEVIVVDT…YLEEVPEEQT (95 aa). C177 serves as the catalytic Cysteine persulfide intermediate.

It belongs to the TrhO family.

It catalyses the reaction uridine(34) in tRNA + AH2 + O2 = 5-hydroxyuridine(34) in tRNA + A + H2O. Catalyzes oxygen-dependent 5-hydroxyuridine (ho5U) modification at position 34 in tRNAs. The polypeptide is tRNA uridine(34) hydroxylase (Saccharophagus degradans (strain 2-40 / ATCC 43961 / DSM 17024)).